The following is a 155-amino-acid chain: Small ribosomal subunit protein bS6 (155 aa).

The interval 94–155 (VKQEGPLPTP…TPELEEQVKS (62 aa)) is disordered. Positions 103-112 (PRSSNKSSNQ) are enriched in polar residues. The segment covering 113 to 141 (AEKKENENIDSANKSEPKADETDNKKKIT) has biased composition (basic and acidic residues).

Belongs to the bacterial ribosomal protein bS6 family.

Functionally, binds together with bS18 to 16S ribosomal RNA. The chain is Small ribosomal subunit protein bS6 from Prochlorococcus marinus (strain MIT 9515).